A 417-amino-acid polypeptide reads, in one-letter code: Tyrosine--tRNA ligase (417 aa).

Y39 contributes to the L-tyrosine binding site. The short motif at 44-53 (ATATSLHIGN) is the 'HIGH' region element. L-tyrosine is bound by residues Y176 and Q180. A 'KMSKS' region motif is present at residues 236–240 (KMGKS). Position 239 (K239) interacts with ATP. The S4 RNA-binding domain occupies 350 to 416 (IGILSLLVTA…GKKKHVLVRP (67 aa)).

Belongs to the class-I aminoacyl-tRNA synthetase family. TyrS type 1 subfamily. As to quaternary structure, homodimer.

The protein localises to the cytoplasm. It carries out the reaction tRNA(Tyr) + L-tyrosine + ATP = L-tyrosyl-tRNA(Tyr) + AMP + diphosphate + H(+). Catalyzes the attachment of tyrosine to tRNA(Tyr) in a two-step reaction: tyrosine is first activated by ATP to form Tyr-AMP and then transferred to the acceptor end of tRNA(Tyr). The protein is Tyrosine--tRNA ligase of Mesorhizobium japonicum (strain LMG 29417 / CECT 9101 / MAFF 303099) (Mesorhizobium loti (strain MAFF 303099)).